The sequence spans 673 residues: UvrABC system protein B (673 aa).

The region spanning 26–183 (EGLEDGLAHQ…RRLAELQYTR (158 aa)) is the Helicase ATP-binding domain. ATP is bound at residue 39–46 (GVTGSGKT). The short motif at 92 to 115 (YYDYYQPEAYVPSSDTFIEKDASV) is the Beta-hairpin element. The Helicase C-terminal domain occupies 431–597 (QVDDLLSEIR…GLNKKVVDIL (167 aa)). One can recognise a UVR domain in the interval 633–668 (QQKIHELEGQMMQHAQNLEFEEAAQIRDQLHQLREL).

Belongs to the UvrB family. In terms of assembly, forms a heterotetramer with UvrA during the search for lesions. Interacts with UvrC in an incision complex.

The protein resides in the cytoplasm. Its function is as follows. The UvrABC repair system catalyzes the recognition and processing of DNA lesions. A damage recognition complex composed of 2 UvrA and 2 UvrB subunits scans DNA for abnormalities. Upon binding of the UvrA(2)B(2) complex to a putative damaged site, the DNA wraps around one UvrB monomer. DNA wrap is dependent on ATP binding by UvrB and probably causes local melting of the DNA helix, facilitating insertion of UvrB beta-hairpin between the DNA strands. Then UvrB probes one DNA strand for the presence of a lesion. If a lesion is found the UvrA subunits dissociate and the UvrB-DNA preincision complex is formed. This complex is subsequently bound by UvrC and the second UvrB is released. If no lesion is found, the DNA wraps around the other UvrB subunit that will check the other stand for damage. The polypeptide is UvrABC system protein B (Salmonella heidelberg (strain SL476)).